Consider the following 188-residue polypeptide: dCTP deaminase (188 aa).

Residues 111 to 116 (KSTYAR), 135 to 137 (TLE), Q156, Y170, and Q180 contribute to the dCTP site. Catalysis depends on E137, which acts as the Proton donor/acceptor.

This sequence belongs to the dCTP deaminase family. As to quaternary structure, homotrimer.

The catalysed reaction is dCTP + H2O + H(+) = dUTP + NH4(+). Its pathway is pyrimidine metabolism; dUMP biosynthesis; dUMP from dCTP (dUTP route): step 1/2. In terms of biological role, catalyzes the deamination of dCTP to dUTP. The chain is dCTP deaminase from Neisseria meningitidis serogroup B (strain ATCC BAA-335 / MC58).